Consider the following 558-residue polypeptide: Potassium-transporting ATPase potassium-binding subunit (558 aa).

A run of 12 helical transmembrane segments spans residues 2-22 (LQGF…APLL), 66-86 (VSAA…ILMF), 135-155 (ALGF…IAFI), 177-197 (ILLP…VPET), 253-273 (LLET…YGIM), 280-300 (GWLI…IAAV), 327-347 (FGWV…CGAV), 354-374 (LMPP…IWGG), 378-398 (GTAY…LMVG), 413-433 (IVLA…PTAI), 482-502 (LSAS…LIFL), and 528-548 (GITA…ILVL).

This sequence belongs to the KdpA family. As to quaternary structure, the system is composed of three essential subunits: KdpA, KdpB and KdpC.

The protein resides in the cell inner membrane. In terms of biological role, part of the high-affinity ATP-driven potassium transport (or Kdp) system, which catalyzes the hydrolysis of ATP coupled with the electrogenic transport of potassium into the cytoplasm. This subunit binds the periplasmic potassium ions and delivers the ions to the membrane domain of KdpB through an intramembrane tunnel. This Synechocystis sp. (strain ATCC 27184 / PCC 6803 / Kazusa) protein is Potassium-transporting ATPase potassium-binding subunit.